We begin with the raw amino-acid sequence, 254 residues long: 4-hydroxy-tetrahydrodipicolinate reductase (254 aa).

Residues 8 to 13 (GGSGRV), 87 to 89 (GTT), and 111 to 114 (ATNM) each bind NAD(+). Catalysis depends on H143, which acts as the Proton donor/acceptor. (S)-2,3,4,5-tetrahydrodipicolinate is bound at residue H144. K147 acts as the Proton donor in catalysis. Residue 153-154 (GT) coordinates (S)-2,3,4,5-tetrahydrodipicolinate.

It belongs to the DapB family.

Its subcellular location is the cytoplasm. It carries out the reaction (S)-2,3,4,5-tetrahydrodipicolinate + NAD(+) + H2O = (2S,4S)-4-hydroxy-2,3,4,5-tetrahydrodipicolinate + NADH + H(+). It catalyses the reaction (S)-2,3,4,5-tetrahydrodipicolinate + NADP(+) + H2O = (2S,4S)-4-hydroxy-2,3,4,5-tetrahydrodipicolinate + NADPH + H(+). It functions in the pathway amino-acid biosynthesis; L-lysine biosynthesis via DAP pathway; (S)-tetrahydrodipicolinate from L-aspartate: step 4/4. Catalyzes the conversion of 4-hydroxy-tetrahydrodipicolinate (HTPA) to tetrahydrodipicolinate. The sequence is that of 4-hydroxy-tetrahydrodipicolinate reductase from Nitratiruptor sp. (strain SB155-2).